The chain runs to 796 residues: High affinity nerve growth factor receptor (796 aa).

Residues 1 to 32 (MLRGGRRGQLGWHSWAAGPGSLLAWLILASAG) form the signal peptide. The Extracellular segment spans residues 33-423 (AAPCPDACCP…TPFGVSVAVG (391 aa)). Intrachain disulfides connect C36–C41 and C40–C50. N-linked (GlcNAc...) asparagine glycans are attached at residues N67, N95, N121, N188, N202, N253, N262, N281, N318, N323, N338, N358, and N401. 2 LRR repeats span residues 90 to 113 (LGEL…AFHF) and 116 to 137 (RLSR…TVQG). Positions 148-193 (NPLHCSCALRWLQRWEEEGLGGVPEQKLQCHGQGPLAHMPNASCGV) constitute an LRRCT domain. A disulfide bridge links C154 with C191. 2 Ig-like C2-type domains span residues 194–283 (PTLK…VNVS) and 299–365 (WCIP…LAAN). Residues C215 and C265 are joined by a disulfide bond. C300 and C345 are joined by a disulfide. A helical transmembrane segment spans residues 424–439 (LAVFACLFLSTLLLVL). At 440-796 (NKCGRRNKFG…APPVYLDVLG (357 aa)) the chain is on the cytoplasmic side. The interaction with SQSTM1 stretch occupies residues 469–490 (MTLGGSSLSPTEGKGSGLQGHI). The residue at position 496 (Y496) is a Phosphotyrosine; by autocatalysis. The region spanning 510-781 (IVLKWELGEG…HSIKDVHARL (272 aa)) is the Protein kinase domain. 516 to 524 (LGEGAFGKV) lines the ATP pocket. A DXXLL motif is present at residues 537–541 (DKMLV). Residue K544 participates in ATP binding. The DXXLL signature appears at 607–611 (DAKLL). The active-site Proton acceptor is the D650. Phosphotyrosine; by autocatalysis occurs at positions 676, 680, 681, and 791.

Belongs to the protein kinase superfamily. Tyr protein kinase family. Insulin receptor subfamily. Exists in a dynamic equilibrium between monomeric (low affinity) and dimeric (high affinity) structures. Homodimerization is induced by binding of a NGF dimer. Interacts with SQSTM1; bridges NTRK1 to NGFR. Forms a ternary complex with NGFR and KIDINS220; this complex is affected by the expression levels of KIDINS220 and an increase in KIDINS220 expression leads to a decreased association of NGFR and NTRK1. Interacts with SH2D1A; regulates NTRK1. Interacts (phosphorylated upon activation by NGF) with SHC1; mediates SHC1 phosphorylation and activation. Interacts (phosphorylated upon activation by NGF) with PLCG1; mediates PLCG1 phosphorylation and activation. Interacts (phosphorylated) with SH2B1 and SH2B2. Interacts with GRB2. Interacts with PIK3R1. Interacts with FRS2. Interacts with SORT1; may regulate NTRK1 anterograde axonal transport. Interacts with RAB7A. Found in a complex, at least composed of KIDINS220, MAGI2, NTRK1 and RAPGEF2; the complex is mainly formed at late endosomes in a nerve growth factor (NGF)-dependent manner. Interacts with RAPGEF2; the interaction is strengthened after NGF stimulation. Interacts with PTPRS. Interacts with USP36; USP36 does not deubiquitinate NTRK1. Interacts with GGA3. Interacts with TSPAN1; this interaction promotes NTRK1 stability. Ligand-mediated autophosphorylation. Interaction with SQSTM1 is phosphotyrosine-dependent. Autophosphorylation at Tyr-496 mediates interaction and phosphorylation of SHC1. Post-translationally, N-glycosylated. Isoform TrkA-I and isoform TrkA-II are N-glycosylated. In terms of processing, ubiquitinated. Undergoes polyubiquitination upon activation; regulated by NGFR. Ubiquitination by NEDD4L leads to degradation. Ubiquitination regulates the internalization of the receptor. Isoform TrkA-I is found in most non-neuronal tissues. Isoform TrkA-II is primarily expressed in neuronal cells. TrkA-III is specifically expressed by pluripotent neural stem and neural crest progenitors.

The protein localises to the cell membrane. The protein resides in the early endosome membrane. Its subcellular location is the late endosome membrane. It localises to the recycling endosome membrane. It catalyses the reaction L-tyrosyl-[protein] + ATP = O-phospho-L-tyrosyl-[protein] + ADP + H(+). The pro-survival signaling effect of NTRK1 in neurons requires its endocytosis into signaling early endosomes and its retrograde axonal transport. This is regulated by different proteins including CFL1, RAC1 and SORT1. NTF3 is unable to induce this signaling probably due to the lability of the NTF3-NTRK1 complex in endosomes. SH2D1A inhibits the autophosphorylation of the receptor, and alters the recruitment and activation of downstream effectors and signaling cascades. Regulated by NGFR. In terms of biological role, receptor tyrosine kinase involved in the development and the maturation of the central and peripheral nervous systems through regulation of proliferation, differentiation and survival of sympathetic and nervous neurons. High affinity receptor for NGF which is its primary ligand. Can also bind and be activated by NTF3/neurotrophin-3. However, NTF3 only supports axonal extension through NTRK1 but has no effect on neuron survival. Upon dimeric NGF ligand-binding, undergoes homodimerization, autophosphorylation and activation. Recruits, phosphorylates and/or activates several downstream effectors including SHC1, FRS2, SH2B1, SH2B2 and PLCG1 that regulate distinct overlapping signaling cascades driving cell survival and differentiation. Through SHC1 and FRS2 activates a GRB2-Ras-MAPK cascade that regulates cell differentiation and survival. Through PLCG1 controls NF-Kappa-B activation and the transcription of genes involved in cell survival. Through SHC1 and SH2B1 controls a Ras-PI3 kinase-AKT1 signaling cascade that is also regulating survival. In absence of ligand and activation, may promote cell death, making the survival of neurons dependent on trophic factors. Functionally, resistant to NGF, it constitutively activates AKT1 and NF-kappa-B and is unable to activate the Ras-MAPK signaling cascade. Antagonizes the anti-proliferative NGF-NTRK1 signaling that promotes neuronal precursors differentiation. Isoform TrkA-III promotes angiogenesis and has oncogenic activity when overexpressed. The protein is High affinity nerve growth factor receptor (NTRK1) of Homo sapiens (Human).